A 283-amino-acid chain; its full sequence is Bifunctional protein FolD (283 aa).

Residues 163–165 (GRS), S188, and I229 contribute to the NADP(+) site.

This sequence belongs to the tetrahydrofolate dehydrogenase/cyclohydrolase family. Homodimer.

The enzyme catalyses (6R)-5,10-methylene-5,6,7,8-tetrahydrofolate + NADP(+) = (6R)-5,10-methenyltetrahydrofolate + NADPH. The catalysed reaction is (6R)-5,10-methenyltetrahydrofolate + H2O = (6R)-10-formyltetrahydrofolate + H(+). The protein operates within one-carbon metabolism; tetrahydrofolate interconversion. Its function is as follows. Catalyzes the oxidation of 5,10-methylenetetrahydrofolate to 5,10-methenyltetrahydrofolate and then the hydrolysis of 5,10-methenyltetrahydrofolate to 10-formyltetrahydrofolate. The polypeptide is Bifunctional protein FolD (Campylobacter fetus subsp. fetus (strain 82-40)).